A 414-amino-acid chain; its full sequence is Tryptophan synthase beta chain (414 aa).

Positions M1–K12 are enriched in basic and acidic residues. Residues M1–E23 form a disordered region. The residue at position 109 (K109) is an N6-(pyridoxal phosphate)lysine.

Belongs to the TrpB family. Tetramer of two alpha and two beta chains. Requires pyridoxal 5'-phosphate as cofactor.

It carries out the reaction (1S,2R)-1-C-(indol-3-yl)glycerol 3-phosphate + L-serine = D-glyceraldehyde 3-phosphate + L-tryptophan + H2O. It participates in amino-acid biosynthesis; L-tryptophan biosynthesis; L-tryptophan from chorismate: step 5/5. Its function is as follows. The beta subunit is responsible for the synthesis of L-tryptophan from indole and L-serine. The chain is Tryptophan synthase beta chain from Prochlorococcus marinus (strain MIT 9515).